Consider the following 713-residue polypeptide: Histone-lysine N-methyltransferase SETDB2 (713 aa).

Positions 78–109 (PEVNTHRSNHTPVTQSEQENKSSAVPSASCDN) are disordered. The span at 87 to 109 (HTPVTQSEQENKSSAVPSASCDN) shows a compositional bias: polar residues. Residues 161–233 (LSLKGENPLQ…DNFSFNTYVQ (73 aa)) enclose the MBD domain. The Pre-SET domain maps to 294–367 (DSCDCSEGCI…MCQNRVIQHG (74 aa)). Residues cysteine 296, cysteine 298, cysteine 302, cysteine 308, cysteine 310, cysteine 348, cysteine 352, cysteine 354, and cysteine 359 each coordinate Zn(2+). In terms of domain architecture, SET spans 370–688 (VRLQVFKSEK…ARTELTWDYG (319 aa)). 380–382 (KGW) contributes to the S-adenosyl-L-methionine binding site. Composition is skewed to basic and acidic residues over residues 511–534 (EDKN…HEDL) and 579–592 (TKQV…KSQE). 2 disordered regions span residues 511 to 549 (EDKN…QLTE) and 579 to 608 (TKQV…CDEE). Residues arginine 642 and 645–646 (NH) contribute to the S-adenosyl-L-methionine site. 4 residues coordinate Zn(2+): cysteine 648, cysteine 701, cysteine 703, and cysteine 708.

This sequence belongs to the class V-like SAM-binding methyltransferase superfamily.

Its subcellular location is the nucleus. It is found in the chromosome. The enzyme catalyses N(6),N(6)-dimethyl-L-lysyl(9)-[histone H3] + S-adenosyl-L-methionine = N(6),N(6),N(6)-trimethyl-L-lysyl(9)-[histone H3] + S-adenosyl-L-homocysteine + H(+). Histone methyltransferase involved in left-right axis specification in early development and mitosis. Specifically trimethylates 'Lys-9' of histone H3 (H3K9me3). H3K9me3 is a specific tag for epigenetic transcriptional repression that recruits HP1 (CBX1, CBX3 and/or CBX5) proteins to methylated histones. Contributes to H3K9me3 in both the interspersed repetitive elements and centromere-associated repeats. Plays a role in chromosome condensation and segregation during mitosis. This Mus musculus (Mouse) protein is Histone-lysine N-methyltransferase SETDB2 (Setdb2).